The chain runs to 599 residues: Elongation factor 4 (599 aa).

The region spanning 4–186 (KYIRNFSIIA…AIVEKVPPPK (183 aa)) is the tr-type G domain. Residues 16–21 (DHGKST) and 133–136 (NKID) each bind GTP.

Belongs to the TRAFAC class translation factor GTPase superfamily. Classic translation factor GTPase family. LepA subfamily.

Its subcellular location is the cell inner membrane. It carries out the reaction GTP + H2O = GDP + phosphate + H(+). Its function is as follows. Required for accurate and efficient protein synthesis under certain stress conditions. May act as a fidelity factor of the translation reaction, by catalyzing a one-codon backward translocation of tRNAs on improperly translocated ribosomes. Back-translocation proceeds from a post-translocation (POST) complex to a pre-translocation (PRE) complex, thus giving elongation factor G a second chance to translocate the tRNAs correctly. Binds to ribosomes in a GTP-dependent manner. The sequence is that of Elongation factor 4 from Bdellovibrio bacteriovorus (strain ATCC 15356 / DSM 50701 / NCIMB 9529 / HD100).